Here is an 875-residue protein sequence, read N- to C-terminus: Phosphoenolpyruvate carboxylase (875 aa).

Active-site residues include His-137 and Lys-542.

Belongs to the PEPCase type 1 family. It depends on Mg(2+) as a cofactor.

It carries out the reaction oxaloacetate + phosphate = phosphoenolpyruvate + hydrogencarbonate. In terms of biological role, forms oxaloacetate, a four-carbon dicarboxylic acid source for the tricarboxylic acid cycle. The polypeptide is Phosphoenolpyruvate carboxylase (Pseudomonas putida (strain ATCC 700007 / DSM 6899 / JCM 31910 / BCRC 17059 / LMG 24140 / F1)).